A 155-amino-acid polypeptide reads, in one-letter code: Protein SprT-like (155 aa).

Positions 7–145 (QRHMEEVSLQ…GSCGGKLIQT (139 aa)) constitute a SprT-like domain. Zn(2+) is bound at residue histidine 67. Glutamate 68 is a catalytic residue. A Zn(2+)-binding site is contributed by histidine 71.

This sequence belongs to the SprT family. Zn(2+) is required as a cofactor.

Its subcellular location is the cytoplasm. In Listeria monocytogenes serovar 1/2a (strain ATCC BAA-679 / EGD-e), this protein is Protein SprT-like.